We begin with the raw amino-acid sequence, 327 residues long: tRNA dimethylallyltransferase (327 aa).

14–21 contacts ATP; sequence GPTASGKT. Residue 16–21 participates in substrate binding; it reads TASGKT. 2 interaction with substrate tRNA regions span residues 39–42 and 163–167; these read DSAL and QRIQR.

This sequence belongs to the IPP transferase family. As to quaternary structure, monomer. Mg(2+) is required as a cofactor.

It carries out the reaction adenosine(37) in tRNA + dimethylallyl diphosphate = N(6)-dimethylallyladenosine(37) in tRNA + diphosphate. Catalyzes the transfer of a dimethylallyl group onto the adenine at position 37 in tRNAs that read codons beginning with uridine, leading to the formation of N6-(dimethylallyl)adenosine (i(6)A). The protein is tRNA dimethylallyltransferase of Xanthomonas campestris pv. campestris (strain 8004).